The following is a 447-amino-acid chain: MKVHMIGVGGAGMSGIAEVLARRGHEVTGSDLKESPYTRRLAAAGVKVYIGHEARQVGDAEVVVISTAIPKTNPELLEARRRSIPVIPRAEALARILAEGRGIAVAGTHGKTTTTSMIAHSLRALGENPTALVGGELNDIGSNVIFGREDLIVAEADESDRSILRLHPQAAVITNIEYDHPDFYASLEEVVETFARFVAGLPPEGHLVLCADDPRCRRLAELAPCPVTTYGLSGGELRARVLSPGSYLLFEGARKRGEVSLGVYGRHNVLNSLAAAGIARWLGHDPLEAARTLGSFGGVRRRFQLKGERSGVRVVDDYAHHPTEIMAILDVARATAAPEGRIIAVFQPHRYSRTRKLYREFGRAFGRADAVVVTEVYGAGEMPQPGVSGKLVVDAICETSDRPEVYYVPDQEALPEVLRMISGPRDTVITLGAGDISRAGEELLARL.

107-113 is an ATP binding site; sequence GTHGKTT.

The protein belongs to the MurCDEF family.

The protein resides in the cytoplasm. The catalysed reaction is UDP-N-acetyl-alpha-D-muramate + L-alanine + ATP = UDP-N-acetyl-alpha-D-muramoyl-L-alanine + ADP + phosphate + H(+). It functions in the pathway cell wall biogenesis; peptidoglycan biosynthesis. Its function is as follows. Cell wall formation. The polypeptide is UDP-N-acetylmuramate--L-alanine ligase (Rubrobacter xylanophilus (strain DSM 9941 / JCM 11954 / NBRC 16129 / PRD-1)).